The chain runs to 37 residues: Esculentin-2JDb (37 aa).

Residues Cys-31 and Cys-37 are joined by a disulfide bond.

In terms of tissue distribution, expressed by the skin glands.

It is found in the secreted. Has antibacterial activity against E.coli and S.aureus strains. The sequence is that of Esculentin-2JDb from Odorrana jingdongensis (Jingdong frog).